We begin with the raw amino-acid sequence, 43 residues long: Protein PsbN (43 aa).

Residues 5-27 (TIFSIFFSCLLIGLTGYSLYTSF) traverse the membrane as a helical segment.

It belongs to the PsbN family.

It localises to the plastid. It is found in the chloroplast thylakoid membrane. May play a role in photosystem I and II biogenesis. In Mesostigma viride (Green alga), this protein is Protein PsbN.